The primary structure comprises 190 residues: Elongation factor P-like protein (190 aa).

The protein belongs to the elongation factor P family.

The protein is Elongation factor P-like protein of Citrobacter koseri (strain ATCC BAA-895 / CDC 4225-83 / SGSC4696).